A 264-amino-acid chain; its full sequence is Acyl-[acyl-carrier-protein]--UDP-N-acetylglucosamine O-acyltransferase (264 aa).

Belongs to the transferase hexapeptide repeat family. LpxA subfamily. As to quaternary structure, homotrimer.

Its subcellular location is the cytoplasm. It catalyses the reaction a (3R)-hydroxyacyl-[ACP] + UDP-N-acetyl-alpha-D-glucosamine = a UDP-3-O-[(3R)-3-hydroxyacyl]-N-acetyl-alpha-D-glucosamine + holo-[ACP]. It participates in glycolipid biosynthesis; lipid IV(A) biosynthesis; lipid IV(A) from (3R)-3-hydroxytetradecanoyl-[acyl-carrier-protein] and UDP-N-acetyl-alpha-D-glucosamine: step 1/6. Functionally, involved in the biosynthesis of lipid A, a phosphorylated glycolipid that anchors the lipopolysaccharide to the outer membrane of the cell. This Chlorobium phaeobacteroides (strain DSM 266 / SMG 266 / 2430) protein is Acyl-[acyl-carrier-protein]--UDP-N-acetylglucosamine O-acyltransferase.